The primary structure comprises 34 residues: Photosystem I reaction center subunit XII (34 aa).

The helical transmembrane segment at Val-4–Ala-24 threads the bilayer.

Belongs to the PsaM family.

Its subcellular location is the cellular thylakoid membrane. This is Photosystem I reaction center subunit XII from Synechococcus sp. (strain CC9605).